Consider the following 488-residue polypeptide: Cytochrome P450 monooxygenase orf2 (488 aa).

Residues 7–27 traverse the membrane as a helical segment; sequence LPGIFLPLAGCVLALSLTTIV. C432 provides a ligand contact to heme.

It belongs to the cytochrome P450 family. Requires heme as cofactor.

The protein resides in the membrane. Its pathway is secondary metabolite biosynthesis. Functionally, cytochrome P450 monooxygenase; part of the gene cluster that mediates the biosynthesis of nigerpyrone and its derivatives carbonarone A and pestalamide A. The biosynthesis pathway begins with the polyketide assembly by epaA to form phenylacetyl triketide precursor from successive condensation of two malonyl-CoA, presumably with one phenylacetyl-CoA starter unit produced by the phenylacetyl-CoA ligase epaB. For the nigerpyrone biosynthesis, the reactive polyketide chain is released as an aldehyde through the R-domain. A nonenzymatic cyclization and dehydration may create nigerpyrone. For the biosynthesis of carbonarone A and pestalamide A, an extra methyl group is added through the C-methyltransferase domain. Several further steps involving the dehydrogenase orf1, the cytochrome P450 monooxygenase orf2 and the FAD-dependent monooxygenase orf3 are required to form a carbonarone A precursor which is converted to carbonarone A via cyclization. The O-acetyltransferase epaC could catalyze the transfer of 2-methylsuccinyl-CoA, a common intermediate in the ethylmalonyl-CoA pathway, to generate the final product pestalamide A. The protein is Cytochrome P450 monooxygenase orf2 of Aspergillus niger (strain ATCC MYA-4892 / CBS 513.88 / FGSC A1513).